The primary structure comprises 60 residues: Potassium channel toxin ImKTx88 (60 aa).

An N-terminal signal peptide occupies residues 1–22 (MSNFSVFLIALLFCSVFILSEA). Cystine bridges form between Cys-30-Cys-51, Cys-36-Cys-56, and Cys-40-Cys-58.

This sequence belongs to the short scorpion toxin superfamily. Potassium channel inhibitor family. In terms of tissue distribution, expressed by the venom gland.

The protein localises to the secreted. In terms of biological role, recombinant toxin selectively inhibits Kv1.3/KCNA3 potassium channels with an IC(50) of 91 pM. In Isometrus maculatus (Lesser brown scorpion), this protein is Potassium channel toxin ImKTx88.